Consider the following 1230-residue polypeptide: Serine/threonine-protein kinase CST20 (1230 aa).

Residues 1–20 (MSILSENNPTPTSITDPNKS) are compositionally biased toward polar residues. Disordered stretches follow at residues 1 to 384 (MSIL…TAHN) and 413 to 470 (SSLE…HSQE). Composition is skewed to low complexity over residues 57 to 70 (NTTS…SLGS) and 96 to 125 (SGSG…NPES). Positions 150–161 (HQGDDSDNEKQY) are enriched in basic and acidic residues. Composition is skewed to polar residues over residues 175 to 197 (DSYS…NNVS), 207 to 224 (TSSL…NENA), and 237 to 246 (PTSKTSSFHD). Residues 248 to 257 (SSVISSSTSV) are compositionally biased toward low complexity. Polar residues-rich tracts occupy residues 262–277 (SNPT…SYKS) and 311–330 (DTLS…TLQG). Low complexity-rich tracts occupy residues 349–381 (NTSA…STST) and 439–468 (KVRG…NSHS). Residues 475–488 (ISTPFNAKHLAHVG) enclose the CRIB domain. Disordered stretches follow at residues 545–831 (FHFD…ALAD) and 867–919 (LREK…KQAA). Polar residues predominate over residues 550 to 561 (NKSSSSGWSNEN). The span at 570–581 (SNSGSGSGGGGA) shows a compositional bias: gly residues. Polar residues predominate over residues 604 to 613 (ITPSQSMPTK). Basic and acidic residues predominate over residues 614–628 (TESKQSENQHPHEDN). Polar residues predominate over residues 629 to 642 (ATQYTPRTPTSHVQ). 3 stretches are compositionally biased toward low complexity: residues 670–683 (PSSQ…SQSD), 696–710 (SPSK…SKSL), and 736–749 (SIPK…SLSS). Residues 750-761 (QLRPATNGSTTA) show a composition bias toward polar residues. The span at 789–807 (APPPPPSAPPAPPVPPAPP) shows a compositional bias: pro residues. Positions 811–826 (LSEQTSEIPQQRTAPS) are enriched in polar residues. Basic and acidic residues predominate over residues 867–876 (LREKNERQNR). The span at 877 to 892 (QQETGQNNADTASGGS) shows a compositional bias: polar residues. The region spanning 953–1205 (YVDLVKIGQG…ADELLHDNFI (253 aa)) is the Protein kinase domain. Residues 959-967 (IGQGASGGV) and Lys-983 each bind ATP. The active-site Proton acceptor is the Asp-1073.

Belongs to the protein kinase superfamily. STE Ser/Thr protein kinase family. STE20 subfamily.

It is found in the cytoplasm. It localises to the nucleus. It catalyses the reaction L-seryl-[protein] + ATP = O-phospho-L-seryl-[protein] + ADP + H(+). It carries out the reaction L-threonyl-[protein] + ATP = O-phospho-L-threonyl-[protein] + ADP + H(+). Functionally, MAP4K component of the MAPK pathway required for the mating pheromone response, and the regulation of cell polarity and cell cycle. Phosphorylates histone H2B to form H2BS10ph. Required for hyphal formation and virulence. This Candida albicans (Yeast) protein is Serine/threonine-protein kinase CST20 (CST20).